Reading from the N-terminus, the 140-residue chain is Organic hydroperoxide resistance protein-like (140 aa).

This sequence belongs to the OsmC/Ohr family.

In Staphylococcus aureus (strain MSSA476), this protein is Organic hydroperoxide resistance protein-like.